Here is a 95-residue protein sequence, read N- to C-terminus: Integration host factor subunit beta (95 aa).

A disordered region spans residues 52–95 (SLHHRPPRVGRNPKTGESVHLPSRRVPHFKPGKELRDRVNSIKD). Positions 82–95 (PGKELRDRVNSIKD) are enriched in basic and acidic residues.

The protein belongs to the bacterial histone-like protein family. In terms of assembly, heterodimer of an alpha and a beta chain.

Functionally, this protein is one of the two subunits of integration host factor, a specific DNA-binding protein that functions in genetic recombination as well as in transcriptional and translational control. The chain is Integration host factor subunit beta from Methylococcus capsulatus (strain ATCC 33009 / NCIMB 11132 / Bath).